A 146-amino-acid polypeptide reads, in one-letter code: MLRILTVVLALVTIATVHAELSKKKEDKTLKDLEDKIVNDVMTHKVMVYSKTYCPWSKRLKAILANYEIDDMKIVELDRSNQTEEMQEILKKYSGRTTVPQLFISGKFVGGHDETKAIEEKGELRPLLEKAHALFTNRVPVPDNGA.

Positions 34–135 (EDKIVNDVMT…PLLEKAHALF (102 aa)) constitute a Glutaredoxin domain. Cysteine 54 is a [2Fe-2S] cluster binding site.

This sequence belongs to the glutaredoxin family. Monothiol subfamily.

This is an uncharacterized protein from Caenorhabditis elegans.